A 94-amino-acid polypeptide reads, in one-letter code: Putative pterin-4-alpha-carbinolamine dehydratase (94 aa).

It belongs to the pterin-4-alpha-carbinolamine dehydratase family.

It carries out the reaction (4aS,6R)-4a-hydroxy-L-erythro-5,6,7,8-tetrahydrobiopterin = (6R)-L-erythro-6,7-dihydrobiopterin + H2O. The protein is Putative pterin-4-alpha-carbinolamine dehydratase of Mycobacterium tuberculosis (strain ATCC 25177 / H37Ra).